We begin with the raw amino-acid sequence, 450 residues long: Probable ECA polymerase (450 aa).

A run of 11 helical transmembrane segments spans residues phenylalanine 6–phenylalanine 26, valine 37–leucine 57, valine 63–alanine 83, valine 118–leucine 138, glycine 155–leucine 175, alanine 181–glycine 201, isoleucine 207–tryptophan 227, methionine 228–tyrosine 248, leucine 341–isoleucine 361, tyrosine 378–alanine 398, and valine 410–phenylalanine 430.

It belongs to the WzyE family. Probably part of a complex composed of WzxE, WzyE and WzzE.

Its subcellular location is the cell inner membrane. It functions in the pathway bacterial outer membrane biogenesis; enterobacterial common antigen biosynthesis. Its function is as follows. Probably involved in the polymerization of enterobacterial common antigen (ECA) trisaccharide repeat units. This Escherichia fergusonii (strain ATCC 35469 / DSM 13698 / CCUG 18766 / IAM 14443 / JCM 21226 / LMG 7866 / NBRC 102419 / NCTC 12128 / CDC 0568-73) protein is Probable ECA polymerase.